Consider the following 226-residue polypeptide: 2-C-methyl-D-erythritol 4-phosphate cytidylyltransferase (226 aa).

The protein belongs to the IspD/TarI cytidylyltransferase family. IspD subfamily.

The catalysed reaction is 2-C-methyl-D-erythritol 4-phosphate + CTP + H(+) = 4-CDP-2-C-methyl-D-erythritol + diphosphate. Its pathway is isoprenoid biosynthesis; isopentenyl diphosphate biosynthesis via DXP pathway; isopentenyl diphosphate from 1-deoxy-D-xylulose 5-phosphate: step 2/6. Catalyzes the formation of 4-diphosphocytidyl-2-C-methyl-D-erythritol from CTP and 2-C-methyl-D-erythritol 4-phosphate (MEP). This Haemophilus ducreyi (strain 35000HP / ATCC 700724) protein is 2-C-methyl-D-erythritol 4-phosphate cytidylyltransferase.